Reading from the N-terminus, the 51-residue chain is Ribosome biogenesis protein Nop10 (51 aa).

Belongs to the NOP10 family.

Its function is as follows. Involved in ribosome biogenesis; more specifically in 18S rRNA pseudouridylation and in cleavage of pre-rRNA. The protein is Ribosome biogenesis protein Nop10 of Methanococcus maripaludis (strain C6 / ATCC BAA-1332).